Here is a 148-residue protein sequence, read N- to C-terminus: Holo-[acyl-carrier-protein] synthase (148 aa).

Mg(2+) is bound by residues D9 and E63.

It belongs to the P-Pant transferase superfamily. AcpS family. Mg(2+) serves as cofactor.

Its subcellular location is the cytoplasm. It catalyses the reaction apo-[ACP] + CoA = holo-[ACP] + adenosine 3',5'-bisphosphate + H(+). Transfers the 4'-phosphopantetheine moiety from coenzyme A to a Ser of acyl-carrier-protein. This chain is Holo-[acyl-carrier-protein] synthase, found in Burkholderia cenocepacia (strain HI2424).